Consider the following 114-residue polypeptide: Large ribosomal subunit protein bL20 (114 aa).

The protein belongs to the bacterial ribosomal protein bL20 family.

Its function is as follows. Binds directly to 23S ribosomal RNA and is necessary for the in vitro assembly process of the 50S ribosomal subunit. It is not involved in the protein synthesizing functions of that subunit. The chain is Large ribosomal subunit protein bL20 from Amoebophilus asiaticus (strain 5a2).